The chain runs to 626 residues: Probable potassium transport system protein Kup 3 (626 aa).

The next 12 membrane-spanning stretches (helical) occupy residues L10–L30, V51–V71, V107–I127, P141–F161, F173–V193, L216–Y236, W251–L271, L293–F313, I341–F361, Y371–V391, A401–V421, and I423–T443.

The protein belongs to the HAK/KUP transporter (TC 2.A.72) family.

Its subcellular location is the cell inner membrane. The enzyme catalyses K(+)(in) + H(+)(in) = K(+)(out) + H(+)(out). Functionally, transport of potassium into the cell. Likely operates as a K(+):H(+) symporter. The chain is Probable potassium transport system protein Kup 3 from Dechloromonas aromatica (strain RCB).